The primary structure comprises 328 residues: Gonadotropin-releasing hormone receptor (328 aa).

The Extracellular segment spans residues 1–38; sequence MANSASPEQNQNHCSASNSSIPLTQANLPTLTLSGKIR. Residue Asn-18 is glycosylated (N-linked (GlcNAc...) asparagine). Residues 39 to 59 traverse the membrane as a helical segment; sequence VTVTFFLFLLSTTFNASFLLK. The Cytoplasmic portion of the chain corresponds to 60 to 84; that stretch reads LHKWTQKKENGKKLSKMKVLLKHLT. The chain crosses the membrane as a helical span at residues 85 to 105; the sequence is LANLLETLIVMPLDGMWNITV. Over 106-115 the chain is Extracellular; that stretch reads QWYAGELLCK. An intrachain disulfide couples Cys-114 to Cys-196. A helical membrane pass occupies residues 116-136; that stretch reads VLSYLKLFSMYAPAFMMVVIS. The Cytoplasmic portion of the chain corresponds to 137 to 157; it reads LDRSLAITRPLAVKSNSKLGR. The chain crosses the membrane as a helical span at residues 158–178; that stretch reads SMIGLAWLLSSIFAGPQLYIF. Residues 179 to 208 lie on the Extracellular side of the membrane; that stretch reads RMIHLADSSGQTEGFSQCVTHCSFPQWWHQ. Residues 209–229 traverse the membrane as a helical segment; it reads AFYNFFTFSCLFIIPLLFMLI. The Cytoplasmic portion of the chain corresponds to 230–271; sequence CNAKIIFTLTRVLHQDPHKLQLNQSKNNIPRARLRTLKMTVA. Residues 272–292 form a helical membrane-spanning segment; it reads FATSFTVCWTPYYVLGIWYWF. Over 293–306 the chain is Extracellular; sequence DPEMLNRVSDPVNH. A helical transmembrane segment spans residues 307-327; that stretch reads FFFLFALLNPCFDPLIYGYFS. Leu-328 is a topological domain (cytoplasmic).

The protein belongs to the G-protein coupled receptor 1 family.

Its subcellular location is the cell membrane. Its function is as follows. Receptor for gonadotropin releasing hormone (GnRH) that mediates the action of GnRH to stimulate the secretion of the gonadotropic hormones luteinizing hormone (LH) and follicle-stimulating hormone (FSH). This receptor mediates its action by association with G-proteins that activate a phosphatidylinositol-calcium second messenger system. The polypeptide is Gonadotropin-releasing hormone receptor (GNRHR) (Equus caballus (Horse)).